We begin with the raw amino-acid sequence, 314 residues long: Porphobilinogen deaminase (314 aa).

C242 carries the S-(dipyrrolylmethanemethyl)cysteine modification.

It belongs to the HMBS family. In terms of assembly, monomer. The cofactor is dipyrromethane.

The catalysed reaction is 4 porphobilinogen + H2O = hydroxymethylbilane + 4 NH4(+). Its pathway is porphyrin-containing compound metabolism; protoporphyrin-IX biosynthesis; coproporphyrinogen-III from 5-aminolevulinate: step 2/4. Functionally, tetrapolymerization of the monopyrrole PBG into the hydroxymethylbilane pre-uroporphyrinogen in several discrete steps. This is Porphobilinogen deaminase (hemC) from Buchnera aphidicola subsp. Acyrthosiphon pisum (strain APS) (Acyrthosiphon pisum symbiotic bacterium).